Consider the following 1201-residue polypeptide: DNA-directed RNA polymerase subunit beta' (1201 aa).

Cysteine 60, cysteine 62, cysteine 75, and cysteine 78 together coordinate Zn(2+). Aspartate 449, aspartate 451, and aspartate 453 together coordinate Mg(2+). Residues cysteine 818, cysteine 892, cysteine 899, and cysteine 902 each coordinate Zn(2+).

Belongs to the RNA polymerase beta' chain family. As to quaternary structure, the RNAP catalytic core consists of 2 alpha, 1 beta, 1 beta' and 1 omega subunit. When a sigma factor is associated with the core the holoenzyme is formed, which can initiate transcription. It depends on Mg(2+) as a cofactor. Requires Zn(2+) as cofactor.

The catalysed reaction is RNA(n) + a ribonucleoside 5'-triphosphate = RNA(n+1) + diphosphate. Functionally, DNA-dependent RNA polymerase catalyzes the transcription of DNA into RNA using the four ribonucleoside triphosphates as substrates. This chain is DNA-directed RNA polymerase subunit beta', found in Listeria innocua serovar 6a (strain ATCC BAA-680 / CLIP 11262).